We begin with the raw amino-acid sequence, 79 residues long: D-alanyl carrier protein (79 aa).

Residues 1-77 (MSTKETVIDL…KIIQGIEELQ (77 aa)) enclose the Carrier domain. Ser35 bears the O-(pantetheine 4'-phosphoryl)serine mark.

It belongs to the DltC family. Post-translationally, 4'-phosphopantetheine is transferred from CoA to a specific serine of apo-DCP.

It localises to the cytoplasm. It participates in cell wall biogenesis; lipoteichoic acid biosynthesis. Carrier protein involved in the D-alanylation of lipoteichoic acid (LTA). The loading of thioester-linked D-alanine onto DltC is catalyzed by D-alanine--D-alanyl carrier protein ligase DltA. The DltC-carried D-alanyl group is further transferred to cell membrane phosphatidylglycerol (PG) by forming an ester bond, probably catalyzed by DltD. D-alanylation of LTA plays an important role in modulating the properties of the cell wall in Gram-positive bacteria, influencing the net charge of the cell wall. This chain is D-alanyl carrier protein, found in Streptococcus equi subsp. equi (strain 4047).